The chain runs to 66 residues: UPF0337 protein RPA4217 (66 aa).

This sequence belongs to the UPF0337 (CsbD) family.

This Rhodopseudomonas palustris (strain ATCC BAA-98 / CGA009) protein is UPF0337 protein RPA4217.